Reading from the N-terminus, the 307-residue chain is Putative oxidoreductase YceM (307 aa).

The protein belongs to the Gfo/Idh/MocA family.

In Escherichia coli (strain K12), this protein is Putative oxidoreductase YceM (yceM).